Consider the following 336-residue polypeptide: Terephthalate 1,2-dioxygenase, reductase component 2 (336 aa).

The 2Fe-2S ferredoxin-type domain maps to 3 to 91; the sequence is HQIHIHDSDI…DIRIHPSSFR (89 aa). Residues Cys-37, Cys-42, Cys-45, and Cys-75 each coordinate [2Fe-2S] cluster. Positions 98-197 constitute an FAD-binding FR-type domain; that stretch reads RKRFTAKVYS…ELPFGSIALK (100 aa).

As to quaternary structure, monomer. Part of a multicomponent enzyme system composed of a reductase (TphA1I or TphA1II) and a two-subunit oxygenase component (TphA2I or TphA2II and TphA3I or TphA3II). FAD serves as cofactor. The cofactor is [2Fe-2S] cluster.

It carries out the reaction terephthalate + NADH + O2 + H(+) = (3S,4R)-3,4-dihydroxycyclohexa-1,5-diene-1,4-dicarboxylate + NAD(+). Functionally, component of the terephthalate 1,2-dioxygenase multicomponent enzyme system which catalyzes the dioxygenation of terephthalate (TER/TPA) to 1,2-dihydroxy-3,5-cyclohexadiene-1,4-dicarboxylic acid (DCD). TphA1 probably reduces TphA2A3. It can also use 2,5-dicarboxypyridine (PDC) and 1,4-napthalenedicarboxylic acid (NDC) as substrates, and preferentially uses NADPH which is the physiological electron donor. This Comamonas sp protein is Terephthalate 1,2-dioxygenase, reductase component 2 (tphA1II).